Reading from the N-terminus, the 454-residue chain is Bifunctional protein GlmU (454 aa).

Residues 1–233 (MQATPRPLAL…EAETIGINSR (233 aa)) form a pyrophosphorylase region. UDP-N-acetyl-alpha-D-glucosamine contacts are provided by residues 13-16 (LAAG), Lys-27, Gln-80, 85-86 (GT), 108-110 (YGD), Gly-145, Glu-159, Asn-174, and Asn-231. Position 110 (Asp-110) interacts with Mg(2+). Residue Asn-231 participates in Mg(2+) binding. The linker stretch occupies residues 234-254 (AELVRAEAQFQSQRRAALIEA). The segment at 255–454 (GVTMQAPDSV…KAIKDAKSKD (200 aa)) is N-acetyltransferase. Positions 320 and 338 each coordinate UDP-N-acetyl-alpha-D-glucosamine. Catalysis depends on His-350, which acts as the Proton acceptor. The UDP-N-acetyl-alpha-D-glucosamine site is built by Tyr-353 and Asn-364. Acetyl-CoA is bound by residues Ala-367, 373 to 374 (NY), Ser-392, Ser-410, and Arg-427.

It in the N-terminal section; belongs to the N-acetylglucosamine-1-phosphate uridyltransferase family. This sequence in the C-terminal section; belongs to the transferase hexapeptide repeat family. Homotrimer. Mg(2+) is required as a cofactor.

It localises to the cytoplasm. The catalysed reaction is alpha-D-glucosamine 1-phosphate + acetyl-CoA = N-acetyl-alpha-D-glucosamine 1-phosphate + CoA + H(+). It carries out the reaction N-acetyl-alpha-D-glucosamine 1-phosphate + UTP + H(+) = UDP-N-acetyl-alpha-D-glucosamine + diphosphate. It functions in the pathway nucleotide-sugar biosynthesis; UDP-N-acetyl-alpha-D-glucosamine biosynthesis; N-acetyl-alpha-D-glucosamine 1-phosphate from alpha-D-glucosamine 6-phosphate (route II): step 2/2. Its pathway is nucleotide-sugar biosynthesis; UDP-N-acetyl-alpha-D-glucosamine biosynthesis; UDP-N-acetyl-alpha-D-glucosamine from N-acetyl-alpha-D-glucosamine 1-phosphate: step 1/1. The protein operates within bacterial outer membrane biogenesis; LPS lipid A biosynthesis. Its function is as follows. Catalyzes the last two sequential reactions in the de novo biosynthetic pathway for UDP-N-acetylglucosamine (UDP-GlcNAc). The C-terminal domain catalyzes the transfer of acetyl group from acetyl coenzyme A to glucosamine-1-phosphate (GlcN-1-P) to produce N-acetylglucosamine-1-phosphate (GlcNAc-1-P), which is converted into UDP-GlcNAc by the transfer of uridine 5-monophosphate (from uridine 5-triphosphate), a reaction catalyzed by the N-terminal domain. The polypeptide is Bifunctional protein GlmU (Jannaschia sp. (strain CCS1)).